A 223-amino-acid polypeptide reads, in one-letter code: Deoxyribose-phosphate aldolase (223 aa).

Residue D91 is the Proton donor/acceptor of the active site. The Schiff-base intermediate with acetaldehyde role is filled by K154. K183 (proton donor/acceptor) is an active-site residue.

Belongs to the DeoC/FbaB aldolase family. DeoC type 1 subfamily.

It localises to the cytoplasm. The enzyme catalyses 2-deoxy-D-ribose 5-phosphate = D-glyceraldehyde 3-phosphate + acetaldehyde. It functions in the pathway carbohydrate degradation; 2-deoxy-D-ribose 1-phosphate degradation; D-glyceraldehyde 3-phosphate and acetaldehyde from 2-deoxy-alpha-D-ribose 1-phosphate: step 2/2. Catalyzes a reversible aldol reaction between acetaldehyde and D-glyceraldehyde 3-phosphate to generate 2-deoxy-D-ribose 5-phosphate. This chain is Deoxyribose-phosphate aldolase, found in Geobacillus sp. (strain WCH70).